Reading from the N-terminus, the 507-residue chain is ATP synthase subunit alpha, chloroplastic (507 aa).

ATP is bound at residue 170–177 (GDRQTGKT).

Belongs to the ATPase alpha/beta chains family. F-type ATPases have 2 components, CF(1) - the catalytic core - and CF(0) - the membrane proton channel. CF(1) has five subunits: alpha(3), beta(3), gamma(1), delta(1), epsilon(1). CF(0) has four main subunits: a, b, b' and c.

It localises to the plastid. It is found in the chloroplast thylakoid membrane. It carries out the reaction ATP + H2O + 4 H(+)(in) = ADP + phosphate + 5 H(+)(out). Produces ATP from ADP in the presence of a proton gradient across the membrane. The alpha chain is a regulatory subunit. In Marchantia polymorpha (Common liverwort), this protein is ATP synthase subunit alpha, chloroplastic.